We begin with the raw amino-acid sequence, 267 residues long: Putative B3 domain-containing protein LOC_Os07g12820 (267 aa).

The TF-B3 DNA-binding region spans 4 to 99 (PTFSMVKIKT…RLNVIIFNKE (96 aa)).

It is found in the nucleus. The chain is Putative B3 domain-containing protein LOC_Os07g12820 from Oryza sativa subsp. japonica (Rice).